Reading from the N-terminus, the 364-residue chain is Alanine racemase (364 aa).

Residue Lys34 is the Proton acceptor; specific for D-alanine of the active site. Lys34 bears the N6-(pyridoxal phosphate)lysine mark. Residue Arg129 coordinates substrate. Tyr259 functions as the Proton acceptor; specific for L-alanine in the catalytic mechanism. Met307 provides a ligand contact to substrate.

It belongs to the alanine racemase family. Pyridoxal 5'-phosphate is required as a cofactor.

The catalysed reaction is L-alanine = D-alanine. It participates in amino-acid biosynthesis; D-alanine biosynthesis; D-alanine from L-alanine: step 1/1. In terms of biological role, catalyzes the interconversion of L-alanine and D-alanine. May also act on other amino acids. This is Alanine racemase (alr) from Coxiella burnetii (strain CbuK_Q154) (Coxiella burnetii (strain Q154)).